The chain runs to 282 residues: Acetylglutamate kinase (282 aa).

Substrate contacts are provided by residues 62-63 (GG), Arg84, and Asn178. Residues Lys196, Ser214, and 266 to 269 (EIFS) each bind L-arginine.

As to quaternary structure, homohexamer.

The protein localises to the cytoplasm. It carries out the reaction N-acetyl-L-glutamate + ATP = N-acetyl-L-glutamyl 5-phosphate + ADP. It functions in the pathway amino-acid biosynthesis; L-arginine biosynthesis; N(2)-acetyl-L-ornithine from L-glutamate: step 2/4. Allosterically inhibited by arginine. Catalyzes the ATP-dependent phosphorylation of N-acetyl-L-glutamate. This chain is Acetylglutamate kinase, found in Thermotoga maritima (strain ATCC 43589 / DSM 3109 / JCM 10099 / NBRC 100826 / MSB8).